Consider the following 406-residue polypeptide: MSNTTVLLDKKTTEIIKATVPVLKEHGEAITKHFYKILLENNPELKNVFNQTNQRKGAQSKALANTVYAAAANIEKLEEILPHVKQIAHKHVSLNIKPEQYPIVGKYLLIAIKEVLGDAATDEIIEAWEKAYFVIADIFISVEKEMYNEKKNQIGGWTGFRDFKVIKKVKESKEITSFYLKPDDNLPITTFIPGQYITIKAQIESEAYVHLRQYSLSTAPGKDYYRISVKREASNQPIGVVSNYLHTSVEVGSVLPISAPAGDFILDERDHRPLVLISGGVGLTPIMSMLESVVEHQPNRNVVFIHAAKSIDHQAMRKRVSEIAKSKEQVKQYVVYSNPTNRTDGDKQGYIDYEWLKEVIPTKDAAFYLCGPKPFMSAINNDLQNMNIAQNDIHMELFGPLEPIAK.

In terms of domain architecture, Globin spans Val6–Lys144. Residue His91 coordinates heme b. Residues Tyr101 and Glu143 each act as charge relay system in the active site. The segment at Gly155–Lys406 is reductase. The region spanning Thr158–Asp267 is the FAD-binding FR-type domain. Residues Tyr196 and Arg212–Ser215 contribute to the FAD site. NADP(+) is bound at residue Gly280–Pro285. Leu397 to Pro400 serves as a coordination point for FAD.

This sequence belongs to the globin family. Two-domain flavohemoproteins subfamily. The protein in the C-terminal section; belongs to the flavoprotein pyridine nucleotide cytochrome reductase family. Heme b serves as cofactor. It depends on FAD as a cofactor.

The catalysed reaction is 2 nitric oxide + NADPH + 2 O2 = 2 nitrate + NADP(+) + H(+). The enzyme catalyses 2 nitric oxide + NADH + 2 O2 = 2 nitrate + NAD(+) + H(+). Is involved in NO detoxification in an aerobic process, termed nitric oxide dioxygenase (NOD) reaction that utilizes O(2) and NAD(P)H to convert NO to nitrate, which protects the bacterium from various noxious nitrogen compounds. Therefore, plays a central role in the inducible response to nitrosative stress. The chain is Flavohemoprotein from Oceanobacillus iheyensis (strain DSM 14371 / CIP 107618 / JCM 11309 / KCTC 3954 / HTE831).